We begin with the raw amino-acid sequence, 439 residues long: MAPKKKRGPSAGSQPGGAAAAGAEQPLSERAQYLQREHALLSEQLDTCEESVDQVLRENAFLDREALRLREENRLYASYVSARAQRCAKAIVRLDEQNRVDLAQIHWQRAELASLYHGREDGVRAQLLEMEARAAQMAQQVQELQPYKVLQLEQLARIRALERELLHMRVEHTQLLHRVKRRFLEDKAAFEREARQRVQSLARRAEREAVRALVAHTQAIKADNGRLRQELLLLLRRTQLLHHTRRQLLEQREQLHREHEDTRDLARVHGWLRRGPGGPPLWERPAFSQPTSRPGSLAAPISPSRAASQTPSVVPSRAAPRASSVVPSREASRVPSLVLSSMDSRVPSLATSKVGSRMPSLTASRAGSRALSLVQSLEGSGISSGSSPRVSSQDTLRSTKSGPKLLSGLSRDRDPALLPPQSEDSVNAEAAAEASPGRA.

The tract at residues 1 to 28 (MAPKKKRGPSAGSQPGGAAAAGAEQPLS) is disordered. Residues 9 to 23 (PSAGSQPGGAAAAGA) are compositionally biased toward low complexity. Coiled-coil stretches lie at residues 27–74 (LSER…EENR) and 121–213 (DGVR…VRAL). The segment at 276 to 439 (PGGPPLWERP…AAAEASPGRA (164 aa)) is disordered. Residues 338–365 (VLSSMDSRVPSLATSKVGSRMPSLTASR) show a composition bias toward polar residues. 2 stretches are compositionally biased toward low complexity: residues 376–392 (SLEGSGISSGSSPRVSS) and 428–439 (AEAAAEASPGRA).

The chain is Coiled-coil domain-containing protein 166 (CCDC166) from Homo sapiens (Human).